The primary structure comprises 130 residues: Holin-like protein CidA (130 aa).

4 helical membrane-spanning segments follow: residues 6–26 (FVIK…IGTE), 31–51 (LHIP…LLQF), 65–85 (FLLK…MDVA), and 93–113 (ILFF…SGYI).

It belongs to the CidA/LrgA family. CidA subfamily.

The protein localises to the cell membrane. Functionally, increases the activity of extracellular murein hydrolases possibly by mediating their export via hole formation. Inhibited by the antiholin-like proteins LrgAB. In an unstressed cell, the LrgAB products probably inhibit the function of the CidAB proteins. When a cell is stressed by the addition of antibiotics or by other factors in the environment, the CidAB proteins possibly oligomerize within the bacterial cell membrane, creating lesions that disrupt the proton motive force, which in turn results in loss of cell viability. These lesions are also hypothesized to regulate the subsequent cell lysis by either allowing the murein hydrolases access to the cell wall substrate and/or regulating their activity by a possible change in the cell wall pH that results from loss of membrane potential. This chain is Holin-like protein CidA, found in Staphylococcus epidermidis (strain ATCC 35984 / DSM 28319 / BCRC 17069 / CCUG 31568 / BM 3577 / RP62A).